The sequence spans 107 residues: Nucleoid-associated protein Daro_0807 (107 aa).

The protein belongs to the YbaB/EbfC family. As to quaternary structure, homodimer.

The protein localises to the cytoplasm. It is found in the nucleoid. Functionally, binds to DNA and alters its conformation. May be involved in regulation of gene expression, nucleoid organization and DNA protection. The chain is Nucleoid-associated protein Daro_0807 from Dechloromonas aromatica (strain RCB).